We begin with the raw amino-acid sequence, 372 residues long: Signal peptide peptidase-like 1 (372 aa).

Residues 1–6 lie on the Lumenal side of the membrane; the sequence is METLWT. Residues 7–27 traverse the membrane as a helical segment; sequence LLYLLEPAPATLIVTAVTVTF. The Cytoplasmic segment spans residues 28-54; sequence ASAFRALNYGKEMERNRDFSEASITLD. The chain crosses the membrane as a helical span at residues 55–77; the sequence is SSQALMIPVMSSCSLLLMFYLFS. Over 78-81 the chain is Lumenal; that stretch reads SVSQ. Residues 82-104 traverse the membrane as a helical segment; sequence LLTAFTAIASVSSLFYWLSPYAV. The Cytoplasmic segment spans residues 105-123; the sequence is YMKTQLGLSDPFLSRCCSK. A helical transmembrane segment spans residues 124–146; that stretch reads SFTRIQGLLLVACAMTVVAWLIS. At 147–149 the chain is on the lumenal side; that stretch reads GHW. Residues 150–167 traverse the membrane as a helical segment; sequence VLNNLLGISICIAFVSHV. Residues 168–171 are Cytoplasmic-facing; the sequence is RLPN. Residues 172–192 form a helical membrane-spanning segment; that stretch reads IKICAMLLVCLFVYDIFWVFF. Aspartate 186 is an active-site residue. Residues 193–257 are Lumenal-facing; the sequence is SERFFGANVM…GVVPGVSASD (65 aa). A helical membrane pass occupies residues 258–278; that stretch reads FMMLGLGDMAIPAMLLALVLC. Residue aspartate 265 is part of the active site. Residues 279–301 are Cytoplasmic-facing; sequence FDHRKTRDVVNIFDLKSSKGHKY. A helical transmembrane segment spans residues 302–322; sequence IWYALPGYAIGLVAALAAGVL. Over 323 to 325 the chain is Lumenal; that stretch reads THS. A helical transmembrane segment spans residues 326-346; sequence PQPALLYLVPSTLGPVIFMSW. Positions 328-330 match the PAL motif; that stretch reads PAL. Over 347–372 the chain is Cytoplasmic; the sequence is RRKDLAELWEGPALSNPIEKSHEIEI.

Belongs to the peptidase A22B family. As to expression, ubiquitous.

The protein localises to the endosome membrane. Functionally, intramembrane-cleaving aspartic protease (I-CLiP) that cleaves type II membrane signal peptides in the hydrophobic plane of the membrane. The protein is Signal peptide peptidase-like 1 (SPPL1) of Arabidopsis thaliana (Mouse-ear cress).